We begin with the raw amino-acid sequence, 503 residues long: SWI/SNF and RSC complexes subunit ssr2 (503 aa).

The SWIRM domain maps to I18–A115. Phosphoserine is present on S175. The ZZ-type; degenerate zinc finger occupies R188 to F242. 4 residues coordinate Zn(2+): C193, C196, C216, and C219. The SANT domain maps to D245–P296. S306 is subject to Phosphoserine.

The protein belongs to the SMARCC family. Component of the RSC complex composed of at least arp9, arp42, rsc1, rsc4, rsc7, rsc9, rsc58, sfh1, snf21, ssr1, ssr2, ssr3 and ssr4. The complex interacts with histone and histone variant components of centromeric chromatin. Component of the SWI/SNF global transcription activator complex composed of at least arp9, arp42, snf5, snf22, snf30, sbf59, sol1, ssr1, ssr2, ssr3, ssr4 and tfg3.

The protein resides in the cytoplasm. It is found in the nucleus. In terms of biological role, component of the chromatin structure remodeling complex (RSC), which is involved in transcription regulation and nucleosome positioning. Controls particularly membrane and organelle development genes. Part of the SWI/SNF complex, an ATP-dependent chromatin remodeling complex, required for the positive and negative regulation of gene expression of a large number of genes. It changes chromatin structure by altering DNA-histone contacts within a nucleosome, leading eventually to a change in nucleosome position, thus facilitating or repressing binding of gene-specific transcription factors. The protein is SWI/SNF and RSC complexes subunit ssr2 (ssr2) of Schizosaccharomyces pombe (strain 972 / ATCC 24843) (Fission yeast).